The sequence spans 495 residues: NADH-ubiquinone oxidoreductase chain 4 (495 aa).

11 helical membrane-spanning segments follow: residues 9 to 29 (YSNLSGLILCPVLGSITPLFI), 39 to 59 (LIGLCASLITFLYSPVPRIQF), 89 to 109 (ISLFFVILTTFLIPICISVGW), 139 to 159 (LLLFYVFPESVPIPMFIIIGV), 173 to 193 (FFLYTLLGSLFMLLAILLILF), 214 to 234 (IFLWIASFASFAVKVPMVPVH), 272 to 292 (FPEATLCSTPFIYTLSAIAII), 313 to 333 (VAHMNLVTIGMFSPNIQGIGG), 335 to 355 (ILPMLSHGLVPSALFLCVGVL), 367 to 387 (YGGLVSTMPNLSTIFFSFTLA), and 413 to 433 (LVATLAALGMILGAAYSLWLY).

This sequence belongs to the complex I subunit 4 family.

The protein resides in the mitochondrion membrane. It catalyses the reaction a ubiquinone + NADH + 5 H(+)(in) = a ubiquinol + NAD(+) + 4 H(+)(out). In terms of biological role, core subunit of the mitochondrial membrane respiratory chain NADH dehydrogenase (Complex I) that is believed to belong to the minimal assembly required for catalysis. Complex I functions in the transfer of electrons from NADH to the respiratory chain. The immediate electron acceptor for the enzyme is believed to be ubiquinone. The polypeptide is NADH-ubiquinone oxidoreductase chain 4 (ND4) (Brassica campestris (Field mustard)).